Reading from the N-terminus, the 923-residue chain is Probable ribosylation factor GTPase-activating protein cnt6 (923 aa).

Phosphoserine is present on Ser-207. Over residues 444–455 (TTRRDKGREMHR) the composition is skewed to basic and acidic residues. The interval 444–476 (TTRRDKGREMHRSQVIQTSGRPKSMAPPSPSPI) is disordered. The 107-residue stretch at 526–632 (KIFKEGLLLV…WIEAICEAAK (107 aa)) folds into the PH domain. Positions 714–837 (NIFIQMLRKT…AFIDFAGVDA (124 aa)) constitute an Arf-GAP domain. The C4-type zinc finger occupies 730 to 754 (CADCGSVKDVTWCSINIPVVLCIEC).

The protein resides in the cytoplasm. It is found in the cell tip. GTPase-activating protein for the ADP ribosylation factor family. The polypeptide is Probable ribosylation factor GTPase-activating protein cnt6 (cnt6) (Schizosaccharomyces pombe (strain 972 / ATCC 24843) (Fission yeast)).